A 113-amino-acid polypeptide reads, in one-letter code: Iron-sulfur cluster insertion protein ErpA (113 aa).

3 residues coordinate iron-sulfur cluster: cysteine 41, cysteine 105, and cysteine 107.

This sequence belongs to the HesB/IscA family. In terms of assembly, homodimer. The cofactor is iron-sulfur cluster.

Its function is as follows. Required for insertion of 4Fe-4S clusters for at least IspG. In Hydrogenovibrio crunogenus (strain DSM 25203 / XCL-2) (Thiomicrospira crunogena), this protein is Iron-sulfur cluster insertion protein ErpA.